Here is a 496-residue protein sequence, read N- to C-terminus: MQISLSSAQPQAWSGTVLALGIAEGDPNGWIPAMEERFSISLGDWLEQRKFQGKNGESASLQLLNPNCESLVLIGLGPLEALDVNSFRQAGAAAARASKNQTGSIGLLLPWNAVDPAEAVTVAAQAVRLALYSDQRFRSKPEPSIHPERLELLGPLPNTLSSALEAVHPICAGVELARELVAAPPNSVTPSALAESAAQMAHEHGLDLKVLERSDCEARGMGSFLSVCQGSDMDPKFIHLTYRPSGPATKRVVLVGKGLTFDSGGYNLKVGAAQIDMMKFDMGGSAAVLGAMRSIAELRPQGVEVHMLVASCENMINGSAVHPGDIVTASNGTTIEINNTDAEGRLTLADALVYASELEPDAIVDLATLTGACVIALGDEIAGLWTGDDSLANSLEGAAKDAGEGLWRMPMHQAYRKGLKSLLADLKNTGPRPGGSITAALFLKEFVRSSIPWAHIDIAGTVWSDKGRGMDPAGATGYGVRTLVSWVCAQTQQAEN.

K257 and D262 together coordinate Mn(2+). The active site involves K269. Mn(2+)-binding residues include D281, D341, and E343. R345 is a catalytic residue.

It belongs to the peptidase M17 family. Requires Mn(2+) as cofactor.

It localises to the cytoplasm. The enzyme catalyses Release of an N-terminal amino acid, Xaa-|-Yaa-, in which Xaa is preferably Leu, but may be other amino acids including Pro although not Arg or Lys, and Yaa may be Pro. Amino acid amides and methyl esters are also readily hydrolyzed, but rates on arylamides are exceedingly low.. The catalysed reaction is Release of an N-terminal amino acid, preferentially leucine, but not glutamic or aspartic acids.. Its function is as follows. Presumably involved in the processing and regular turnover of intracellular proteins. Catalyzes the removal of unsubstituted N-terminal amino acids from various peptides. The chain is Probable cytosol aminopeptidase from Synechococcus sp. (strain CC9311).